A 488-amino-acid polypeptide reads, in one-letter code: Germacrene A hydroxylase (488 aa).

Residues 1-6 (MEVSLT) are Cytoplasmic-facing. The chain crosses the membrane as a helical; Signal-anchor for type II membrane protein span at residues 7 to 23 (TSIALATIVFFLYKLLT). Over 24–488 (RPTSSKNRLP…KTELMLVPSF (465 aa)) the chain is Lumenal. Asn-169, Asn-260, Asn-379, and Asn-412 each carry an N-linked (GlcNAc...) asparagine glycan. A heme-binding site is contributed by Cys-432.

The protein belongs to the cytochrome P450 family. The cofactor is heme. Expressed in leaf primordia.

Its subcellular location is the endoplasmic reticulum membrane. The catalysed reaction is (+)-(R)-germacrene A + 3 reduced [NADPH--hemoprotein reductase] + 3 O2 = germacra-1(10),4,11(13)-trien-12-oate + 3 oxidized [NADPH--hemoprotein reductase] + 4 H2O + 4 H(+). It participates in secondary metabolite biosynthesis; terpenoid biosynthesis. Functionally, involved in the biosynthesis of germacrene-derived sesquiterpene lactones. Catalyzes three consecutive oxidations of germacrene A to produce germacrene A acid. Could also catalyze the three-step oxidation of non-natural substrate amorphadiene to artemisinic acid. This Helianthus annuus (Common sunflower) protein is Germacrene A hydroxylase.